The chain runs to 230 residues: Protein CbbY (230 aa).

D8 acts as the Nucleophile in catalysis. Positions 8 and 10 each coordinate Mg(2+). D8 provides a ligand contact to substrate. D10 serves as the catalytic Proton donor. Substrate-binding positions include E17, 50–54 (GGKER), 75–78 (HRAK), and 115–121 (TTTSLPN). A Mg(2+)-binding site is contributed by D176.

The protein belongs to the HAD-like hydrolase superfamily. CbbY/CbbZ/Gph/YieH family. Requires Mg(2+) as cofactor.

The catalysed reaction is D-xylulose 1,5-bisphosphate + H2O = D-xylulose 5-phosphate + phosphate. Highly selective xylulose-1,5-bisphosphate (XuBP) phosphatase. Also shows activity towards ribulose-1,5-bisphosphate (RuBP) and fructose-1,6-bisphosphate (FBP), but not towards fructose-6-phosphate (F6P) or ribulose-5-phosphate (Ru5P). Degrades xylulose-1,5-bisphosphate, a potent inhibitor of rubisco produced by the rubisco itself. This Cereibacter sphaeroides (Rhodobacter sphaeroides) protein is Protein CbbY.